Consider the following 272-residue polypeptide: Putative pyruvate, phosphate dikinase regulatory protein (272 aa).

Residue glycine 151–threonine 158 participates in ADP binding.

It belongs to the pyruvate, phosphate/water dikinase regulatory protein family. PDRP subfamily.

It carries out the reaction N(tele)-phospho-L-histidyl/L-threonyl-[pyruvate, phosphate dikinase] + ADP = N(tele)-phospho-L-histidyl/O-phospho-L-threonyl-[pyruvate, phosphate dikinase] + AMP + H(+). The catalysed reaction is N(tele)-phospho-L-histidyl/O-phospho-L-threonyl-[pyruvate, phosphate dikinase] + phosphate + H(+) = N(tele)-phospho-L-histidyl/L-threonyl-[pyruvate, phosphate dikinase] + diphosphate. In terms of biological role, bifunctional serine/threonine kinase and phosphorylase involved in the regulation of the pyruvate, phosphate dikinase (PPDK) by catalyzing its phosphorylation/dephosphorylation. The sequence is that of Putative pyruvate, phosphate dikinase regulatory protein from Staphylococcus aureus (strain Mu3 / ATCC 700698).